The following is a 325-amino-acid chain: Polyprenyl transferase mpaA (325 aa).

The next 3 membrane-spanning stretches (helical) occupy residues 27-47, 56-76, and 108-128; these read MPYYTMMAAVWSTLIAGALKL, VEYILFKAGLCFVHCLLLCGA, and VEALVWMVGQYFLSVKMLDLI. Residue asparagine 131 is glycosylated (N-linked (GlcNAc...) asparagine). The next 6 helical transmembrane spans lie at 134 to 151, 159 to 179, 192 to 212, 240 to 260, 262 to 282, and 295 to 315; these read IWGLMLPLTASIMLYPYL, VFIYPQYILGLAVAYPSITGW, IFTHCTPICLLIFFWCLYFNT, LFLAFLGALPLAVIPYVVLKI, SPWLWFSWMAVWTVSIVMQIV, and IHWDNFLLGLWTTVACIVEVG.

The protein belongs to the UbiA prenyltransferase family. Mg(2+) serves as cofactor.

Its subcellular location is the golgi apparatus membrane. It catalyses the reaction 5,7-dihydroxy-4-methylphthalide + (2E,6E)-farnesyl diphosphate = 4-farnesyl-3,5-dihydroxy-6-methylphthalide + diphosphate. The protein operates within secondary metabolite biosynthesis; terpenoid biosynthesis. Polyprenyl transferase; part of the gene cluster that mediates the biosynthesis of mycophenolic acid (MPA), the first isolated antibiotic natural product in the world obtained from a culture of Penicillium brevicompactum in 1893. MpaA is a Golgi apparatus-associated enzyme that catalyzes the prenylation of 5,7-dihydroxy-4,6-dimethylphthalide (DHMP) to yield farnesyl-DHMP (FDHMP). The first step of the pathway is the synthesis of 5-methylorsellinic acid (5MOA) by the cytosolic polyketide synthase mpaC. 5MOA is then converted to the phthalide compound 5,7-dihydroxy-4,6-dimethylphthalide (DHMP) by the endoplasmic reticulum-bound cytochrome P450 monooxygenase mpaDE. MpaDE first catalyzes hydroxylation of 5-MOA to 4,6-dihydroxy-2-(hydroxymethyl)-3-methylbenzoic acid (DHMB). MpaDE then acts as a lactone synthase that catalyzes the ring closure to convert DHMB into DHMP. The next step is the prenylation of DHMP by the Golgi apparatus-associated prenyltransferase mpaA to yield farnesyl-DHMP (FDHMP). The ER-bound oxygenase mpaB then mediates the oxidative cleavage the C19-C20 double bond in FDHMP to yield FDHMP-3C via a mycophenolic aldehyde intermediate. The O-methyltransferase mpaG catalyzes the methylation of FDHMP-3C to yield MFDHMP-3C. After the cytosolic methylation of FDHMP-3C, MFDHMP-3C enters into peroxisomes probably via free diffusion due to its low molecular weight. Upon a peroxisomal CoA ligation reaction, catalyzed by a beta-oxidation component enzyme acyl-CoA ligase ACL891, MFDHMP-3C-CoA would then be restricted to peroxisomes for the following beta-oxidation pathway steps. The peroxisomal beta-oxidation machinery than converts MFDHMP-3C-CoA into MPA_CoA, via a beta-oxidation chain-shortening process. Finally mpaH acts as a peroxisomal acyl-CoA hydrolase with high substrate specificity toward MPA-CoA to release the final product MPA. This Penicillium roqueforti (strain FM164) protein is Polyprenyl transferase mpaA.